The sequence spans 124 residues: ATP synthase epsilon chain (124 aa).

It belongs to the ATPase epsilon chain family. In terms of assembly, F-type ATPases have 2 components, CF(1) - the catalytic core - and CF(0) - the membrane proton channel. CF(1) has five subunits: alpha(3), beta(3), gamma(1), delta(1), epsilon(1). CF(0) has three main subunits: a, b and c.

It localises to the cell membrane. Its function is as follows. Produces ATP from ADP in the presence of a proton gradient across the membrane. The sequence is that of ATP synthase epsilon chain from Streptomyces griseus subsp. griseus (strain JCM 4626 / CBS 651.72 / NBRC 13350 / KCC S-0626 / ISP 5235).